A 172-amino-acid polypeptide reads, in one-letter code: 3-phenylpropionate/cinnamic acid dioxygenase subunit beta (172 aa).

This sequence belongs to the bacterial ring-hydroxylating dioxygenase beta subunit family. This dioxygenase system consists of four proteins: the two subunits of the hydroxylase component (HcaE and HcaF), a ferredoxin (HcaC) and a ferredoxin reductase (HcaD).

The catalysed reaction is 3-phenylpropanoate + NADH + O2 + H(+) = 3-(cis-5,6-dihydroxycyclohexa-1,3-dien-1-yl)propanoate + NAD(+). It carries out the reaction (E)-cinnamate + NADH + O2 + H(+) = (2E)-3-(cis-5,6-dihydroxycyclohexa-1,3-dien-1-yl)prop-2-enoate + NAD(+). It functions in the pathway aromatic compound metabolism; 3-phenylpropanoate degradation. Its function is as follows. Part of the multicomponent 3-phenylpropionate dioxygenase. Converts 3-phenylpropionic acid (PP) and cinnamic acid (CI) into 3-phenylpropionate-dihydrodiol (PP-dihydrodiol) and cinnamic acid-dihydrodiol (CI-dihydrodiol), respectively. This is 3-phenylpropionate/cinnamic acid dioxygenase subunit beta from Shigella boydii serotype 4 (strain Sb227).